A 442-amino-acid polypeptide reads, in one-letter code: 23S rRNA (uracil(1939)-C(5))-methyltransferase RlmD (442 aa).

The TRAM domain maps to 10 to 75 (AKQTAKNCCK…RQYGRAKANK (66 aa)). Cys88, Cys94, Cys97, and Cys173 together coordinate [4Fe-4S] cluster. Gln276, Phe305, Asn310, Glu326, Asn353, and Asp374 together coordinate S-adenosyl-L-methionine. The active-site Nucleophile is the Cys400.

It belongs to the class I-like SAM-binding methyltransferase superfamily. RNA M5U methyltransferase family. RlmD subfamily.

It catalyses the reaction uridine(1939) in 23S rRNA + S-adenosyl-L-methionine = 5-methyluridine(1939) in 23S rRNA + S-adenosyl-L-homocysteine + H(+). Its function is as follows. Catalyzes the formation of 5-methyl-uridine at position 1939 (m5U1939) in 23S rRNA. In Haemophilus ducreyi (strain 35000HP / ATCC 700724), this protein is 23S rRNA (uracil(1939)-C(5))-methyltransferase RlmD.